Here is a 579-residue protein sequence, read N- to C-terminus: ATP-dependent lipid A-core flippase (579 aa).

4 helical membrane passes run phenylalanine 24–methionine 44, leucine 61–glycine 81, leucine 147–phenylalanine 167, and leucine 253–alanine 273. Residues leucine 25–lysine 306 form the ABC transmembrane type-1 domain. One can recognise an ABC transporter domain in the interval valine 338 to leucine 573. ATP is bound at residue glycine 372–serine 379.

Belongs to the ABC transporter superfamily. Lipid exporter (TC 3.A.1.106) family. As to quaternary structure, homodimer.

It localises to the cell inner membrane. It carries out the reaction ATP + H2O + lipid A-core oligosaccharideSide 1 = ADP + phosphate + lipid A-core oligosaccharideSide 2.. In terms of biological role, involved in lipopolysaccharide (LPS) biosynthesis. Translocates lipid A-core from the inner to the outer leaflet of the inner membrane. Transmembrane domains (TMD) form a pore in the inner membrane and the ATP-binding domain (NBD) is responsible for energy generation. This Chromohalobacter salexigens (strain ATCC BAA-138 / DSM 3043 / CIP 106854 / NCIMB 13768 / 1H11) protein is ATP-dependent lipid A-core flippase.